We begin with the raw amino-acid sequence, 342 residues long: L-lysine 2,3-aminomutase (342 aa).

The region spanning 106–329 (HKYQNRALLL…PRLAREIGGE (224 aa)) is the Radical SAM core domain. Cysteine 120, cysteine 124, and cysteine 127 together coordinate [4Fe-4S] cluster. Lysine 332 carries the post-translational modification N6-(pyridoxal phosphate)lysine.

This sequence belongs to the radical SAM superfamily. KamA family. It depends on [4Fe-4S] cluster as a cofactor. Requires pyridoxal 5'-phosphate as cofactor.

It catalyses the reaction L-lysine = D-beta-lysine. Its function is as follows. With EpmA is involved in the beta-lysylation step of the post-translational modification of translation elongation factor P (EF-P) on 'Lys-34'. EpmB appears to act before EpmA. Displays lysine 2,3-aminomutase activity, producing (R)-beta-lysine from (S)-alpha-lysine (L-lysine). This chain is L-lysine 2,3-aminomutase (epmB), found in Salmonella typhimurium (strain LT2 / SGSC1412 / ATCC 700720).